Consider the following 56-residue polypeptide: Alpha-pompilidotoxin (56 aa).

Positions 1–22 (MFKQLILLALAAVFLLINISSA) are cleaved as a signal peptide. A propeptide spanning residues 23 to 42 (EPAAEPNANAEPLAEASAEP) is cleaved from the precursor. A Leucine amide modification is found at leucine 55.

Expressed by the venom gland.

Its subcellular location is the secreted. In terms of biological role, inhibits sodium channels (Nav) inactivation. Shows two types of inhibitory activities on channels. Inhibition of hNav1.6/SCN8A shows a large increase in the steady-state current component without any increase in the slow component, whereas inhibition of hNav1.1/SCN1A, hNav1.2/SCN2A, hNav1.3/SCN3A and hNav1.7/SCN9A shows a large increase in the slow component with only a small steady-state component. Is 5-fold less potent than beta-PMTX for inducing repetitive action potentials in lobster neuromuscular junctions. This Anoplius samariensis (Solitary wasp) protein is Alpha-pompilidotoxin.